The primary structure comprises 511 residues: Piperic acid synthase CYP719A37 (511 aa).

A helical transmembrane segment spans residues 7-27 (VDPALFSAFVSIIFFFLGMFL). Cys455 provides a ligand contact to heme.

The protein belongs to the cytochrome P450 family. Heme is required as a cofactor. In terms of tissue distribution, specifically expressed in immature fruits and roots. Barely detectable in young leaves and flowering spadices.

It localises to the membrane. The protein resides in the endoplasmic reticulum membrane. It catalyses the reaction (E,E)-feruperate + reduced [NADPH--hemoprotein reductase] + O2 = (E,E)-piperate + oxidized [NADPH--hemoprotein reductase] + 2 H2O + H(+). Its pathway is aromatic compound metabolism. Functionally, cytochrome P450 monooxygenase involved in the biosynthesis of aromatic piperamides natural products such as piperine (1-piperoyl-piperidine), the pungent principle contributing, together with several terpenoids, to the aromatic properties of black pepper fruits, and displaying numerous pharmacological activities such as antiproliferative, antitumor, antiangiogenesis, antioxidant, antidiabetic, antiobesity, cardioprotective, antimicrobial, antiaging, and immunomodulatory effects. Catalyzes the conversion of feruperic acid (5-(4-hydroxy-3-methoxyphenyl)-2,4-pentadienoic acid) to piperic acid. Inactive toward ferulic acid and feruperine. The sequence is that of Piperic acid synthase CYP719A37 from Piper nigrum (Black pepper).